Here is a 215-residue protein sequence, read N- to C-terminus: UPF0502 protein YceH (215 aa).

K80 bears the N6-acetyllysine mark.

Belongs to the UPF0502 family.

This Shigella boydii serotype 18 (strain CDC 3083-94 / BS512) protein is UPF0502 protein YceH.